The primary structure comprises 448 residues: Methionine aminopeptidase 2-1 (448 aa).

Residues 1–90 (MAAQASEKLE…PPRVPVSSLF (90 aa)) are disordered. A compositionally biased stretch (low complexity) spans 22-33 (AAGPAKAGQADA). A compositionally biased stretch (acidic residues) spans 34–46 (GEVEDESDDDADD). Positions 47–58 (AGAAADGAANGA) are enriched in low complexity. A compositionally biased stretch (basic residues) spans 59 to 74 (AKKKKKRKSKKKKKGG). A compositionally biased stretch (low complexity) spans 75-88 (AKVQSSPPRVPVSS). Histidine 198 contributes to the substrate binding site. A divalent metal cation contacts are provided by aspartate 218, aspartate 229, and histidine 301. Residue histidine 309 coordinates substrate. Residues glutamate 334 and glutamate 429 each contribute to the a divalent metal cation site.

Belongs to the peptidase M24A family. Methionine aminopeptidase eukaryotic type 2 subfamily. Co(2+) is required as a cofactor. Requires Zn(2+) as cofactor. It depends on Mn(2+) as a cofactor. The cofactor is Fe(2+).

It is found in the cytoplasm. It catalyses the reaction Release of N-terminal amino acids, preferentially methionine, from peptides and arylamides.. In terms of biological role, cotranslationally removes the N-terminal methionine from nascent proteins. The N-terminal methionine is often cleaved when the second residue in the primary sequence is small and uncharged (Met-Ala-, Cys, Gly, Pro, Ser, Thr, or Val). This chain is Methionine aminopeptidase 2-1, found in Emericella nidulans (strain FGSC A4 / ATCC 38163 / CBS 112.46 / NRRL 194 / M139) (Aspergillus nidulans).